An 801-amino-acid polypeptide reads, in one-letter code: Heavy metal tolerance factor 1 (801 aa).

The Lumenal portion of the chain corresponds to 1-24 (MGFSPFLDECRAEGLWPIGPSCNK). A helical membrane pass occupies residues 25–45 (IISFGVYTFFIVVNFIVLCIP). The Cytoplasmic segment spans residues 46–75 (NSNSANNNYRRMTDDDASSTSKLTISKILS). A helical transmembrane segment spans residues 76-96 (ICTIFAVICQSIFYFCFTFYF). Residues 97–101 (HPYTH) lie on the Lumenal side of the membrane. Residues 102–122 (LLLAFCVSKLFFWILSLCSFS) traverse the membrane as a helical segment. Over 123-129 (KWRNQPS) the chain is Cytoplasmic. Residues 130–150 (TPISLAFAFSAALLIHCIPLT) form a helical membrane-spanning segment. The Lumenal segment spans residues 151 to 167 (DWKKYFEPTSKNRGDLT). The chain crosses the membrane as a helical span at residues 168-188 (FYIIELALVTVVFFFTIVTGL). Over 189-226 (FNFSGCSSRESAWNNLSKKVVTVAPYIWPTKSISLQLR) the chain is Cytoplasmic. The helical transmembrane segment at 227-247 (VVFCLFLLIIGRLINVSLPIL) threads the bilayer. The 290-residue stretch at 227–516 (VVFCLFLLII…FGTIYRVIQK (290 aa)) folds into the ABC transmembrane type-1 domain. The Lumenal segment spans residues 248–264 (SKWIVDELATPDTFQYS). A helical membrane pass occupies residues 265 to 285 (LLFLATFLKFLQGNGAMGGFL). Residues 286–341 (NTVRTYLWIPIQQYTTRELEVELFKHLHSLSLRWHLSRKTGQVLRVMDRGTSSVNN) are Cytoplasmic-facing. The chain crosses the membrane as a helical span at residues 342-364 (ILNYILFNVVPTIADIVIAVIFF). Residues 365–371 (FSAFNAY) lie on the Lumenal side of the membrane. A helical membrane pass occupies residues 372–390 (FGLIVFGTMALYLTVTISI). At 391 to 461 (TEWRTQYIRE…SLAFLNCLQN (71 aa)) the chain is on the cytoplasmic side. A helical membrane pass occupies residues 462–482 (AIIGIGMIGGSVFVVYMIVHE). The Lumenal portion of the chain corresponds to 483–489 (KTLTVGD). The helical transmembrane segment at 490–510 (YVLFTTYLLQLYTPLNFFGTI) threads the bilayer. The Cytoplasmic portion of the chain corresponds to 511–801 (YRVIQKAFVD…KSIELGEELP (291 aa)). An ABC transporter domain is found at 550-784 (ISVKNLTFEY…QGTYASMWEA (235 aa)). 583–590 (GSSGSGKS) provides a ligand contact to ATP.

The protein belongs to the ABC transporter superfamily. ABCB family. Heavy Metal importer (TC 3.A.1.210) subfamily. In terms of tissue distribution, expressed in coelomocytes, as well as in head and tail neurons, and in the intestinal cells.

The protein resides in the vacuole membrane. It is found in the early endosome. It localises to the late endosome. The protein localises to the recycling endosome. In terms of biological role, may play a pivotal role in the detoxification of heavy metals such as cadmium but do not depend exclusively on phytochelatins (PC) synthesis. The polypeptide is Heavy metal tolerance factor 1 (Caenorhabditis elegans).